The chain runs to 61 residues: Photosystem II reaction center protein K (61 aa).

The propeptide occupies 1–24 (MLNIFCLICICLNSTLYSSSFFFA). Residues 32–52 (FFNPIIDVMPIIPVLFFLLAF) traverse the membrane as a helical segment.

Belongs to the PsbK family. In terms of assembly, PSII is composed of 1 copy each of membrane proteins PsbA, PsbB, PsbC, PsbD, PsbE, PsbF, PsbH, PsbI, PsbJ, PsbK, PsbL, PsbM, PsbT, PsbX, PsbY, PsbZ, Psb30/Ycf12, at least 3 peripheral proteins of the oxygen-evolving complex and a large number of cofactors. It forms dimeric complexes.

It is found in the plastid. It localises to the chloroplast thylakoid membrane. Functionally, one of the components of the core complex of photosystem II (PSII). PSII is a light-driven water:plastoquinone oxidoreductase that uses light energy to abstract electrons from H(2)O, generating O(2) and a proton gradient subsequently used for ATP formation. It consists of a core antenna complex that captures photons, and an electron transfer chain that converts photonic excitation into a charge separation. This chain is Photosystem II reaction center protein K, found in Phalaenopsis aphrodite subsp. formosana (Moth orchid).